The sequence spans 387 residues: MHCAILKAEAVDGAHLMQIFWHDGAESLYPAVWLRDNCQCSDCYLHSAKARKLLLEALDVNIRIDDLTFDRKKVYITWPNDHYSEFEANWLKKRCFSQQARARLQGELFLPECQYWGSELQLPTLNFEDVLNDDDHAYKWLSSLKKVGIVRLTGAADKRGEIIKLGKRIGFLYLTFYGHTWQVQDKIDANNVAYTTGKLSFHTDYPALHHPPGVQLLHCIKQTVTGGDSEIVDGFNVCQKLKEKNPQAFHILSSTFVDFTDIGVDYCDFSVQSKHKIIELDDKGQVVRVNFNNATRDTVFDVPIERVQPFYAALKEFVDLMNSKEYKYTFKMNPGDVITFDNWRLLHGRRSYEAGTEISRHLEGAYADWDVVMSRLRILRQRVTNGN.

Positions 38, 40, 43, and 82 each coordinate Zn(2+). 3 residues coordinate Fe cation: histidine 202, aspartate 204, and histidine 347. Serine 351 is modified (phosphoserine).

This sequence belongs to the gamma-BBH/TMLD family. Requires Fe(2+) as cofactor. It depends on L-ascorbate as a cofactor.

It is found in the cytoplasm. The catalysed reaction is 4-(trimethylamino)butanoate + 2-oxoglutarate + O2 = carnitine + succinate + CO2. It functions in the pathway amine and polyamine biosynthesis; carnitine biosynthesis. Functionally, catalyzes the formation of L-carnitine from gamma-butyrobetaine. In Mus musculus (Mouse), this protein is Gamma-butyrobetaine dioxygenase (Bbox1).